The following is a 271-amino-acid chain: S-adenosylmethionine decarboxylase proenzyme (271 aa).

Serine 121 acts as the Schiff-base intermediate with substrate; via pyruvic acid in catalysis. Serine 121 carries the pyruvic acid (Ser); by autocatalysis modification. Catalysis depends on histidine 126, which acts as the Proton acceptor; for processing activity. The active-site Proton donor; for catalytic activity is the cysteine 149.

This sequence belongs to the prokaryotic AdoMetDC family. Type 2 subfamily. As to quaternary structure, heterooctamer of four alpha and four beta chains arranged as a tetramer of alpha/beta heterodimers. Pyruvate is required as a cofactor. Is synthesized initially as an inactive proenzyme. Formation of the active enzyme involves a self-maturation process in which the active site pyruvoyl group is generated from an internal serine residue via an autocatalytic post-translational modification. Two non-identical subunits are generated from the proenzyme in this reaction, and the pyruvate is formed at the N-terminus of the alpha chain, which is derived from the carboxyl end of the proenzyme. The post-translation cleavage follows an unusual pathway, termed non-hydrolytic serinolysis, in which the side chain hydroxyl group of the serine supplies its oxygen atom to form the C-terminus of the beta chain, while the remainder of the serine residue undergoes an oxidative deamination to produce ammonia and the pyruvoyl group blocking the N-terminus of the alpha chain.

The catalysed reaction is S-adenosyl-L-methionine + H(+) = S-adenosyl 3-(methylsulfanyl)propylamine + CO2. The protein operates within amine and polyamine biosynthesis; S-adenosylmethioninamine biosynthesis; S-adenosylmethioninamine from S-adenosyl-L-methionine: step 1/1. Functionally, catalyzes the decarboxylation of S-adenosylmethionine to S-adenosylmethioninamine (dcAdoMet), the propylamine donor required for the synthesis of the polyamines spermine and spermidine from the diamine putrescine. This is S-adenosylmethionine decarboxylase proenzyme from Clostridium perfringens (strain SM101 / Type A).